The primary structure comprises 445 residues: tRNA(Ile)-lysidine synthase (445 aa).

38-43 (SGGLDS) contributes to the ATP binding site.

It belongs to the tRNA(Ile)-lysidine synthase family.

Its subcellular location is the cytoplasm. The enzyme catalyses cytidine(34) in tRNA(Ile2) + L-lysine + ATP = lysidine(34) in tRNA(Ile2) + AMP + diphosphate + H(+). Ligates lysine onto the cytidine present at position 34 of the AUA codon-specific tRNA(Ile) that contains the anticodon CAU, in an ATP-dependent manner. Cytidine is converted to lysidine, thus changing the amino acid specificity of the tRNA from methionine to isoleucine. This is tRNA(Ile)-lysidine synthase from Neisseria gonorrhoeae (strain ATCC 700825 / FA 1090).